The sequence spans 231 residues: 5'-methylthioadenosine/S-adenosylhomocysteine nucleosidase (231 aa).

Catalysis depends on Glu-12, which acts as the Proton acceptor. Residues Gly-78, Val-153, and 174–175 (ME) each bind substrate. The Proton donor role is filled by Asp-198.

Belongs to the PNP/UDP phosphorylase family. MtnN subfamily.

The enzyme catalyses S-adenosyl-L-homocysteine + H2O = S-(5-deoxy-D-ribos-5-yl)-L-homocysteine + adenine. It carries out the reaction S-methyl-5'-thioadenosine + H2O = 5-(methylsulfanyl)-D-ribose + adenine. The catalysed reaction is 5'-deoxyadenosine + H2O = 5-deoxy-D-ribose + adenine. It functions in the pathway amino-acid biosynthesis; L-methionine biosynthesis via salvage pathway; S-methyl-5-thio-alpha-D-ribose 1-phosphate from S-methyl-5'-thioadenosine (hydrolase route): step 1/2. In terms of biological role, catalyzes the irreversible cleavage of the glycosidic bond in both 5'-methylthioadenosine (MTA) and S-adenosylhomocysteine (SAH/AdoHcy) to adenine and the corresponding thioribose, 5'-methylthioribose and S-ribosylhomocysteine, respectively. Also cleaves 5'-deoxyadenosine, a toxic by-product of radical S-adenosylmethionine (SAM) enzymes, into 5-deoxyribose and adenine. This Vibrio vulnificus (strain YJ016) protein is 5'-methylthioadenosine/S-adenosylhomocysteine nucleosidase.